We begin with the raw amino-acid sequence, 190 residues long: Elongation factor P (190 aa).

Belongs to the elongation factor P family.

It is found in the cytoplasm. Its pathway is protein biosynthesis; polypeptide chain elongation. In terms of biological role, involved in peptide bond synthesis. Stimulates efficient translation and peptide-bond synthesis on native or reconstituted 70S ribosomes in vitro. Probably functions indirectly by altering the affinity of the ribosome for aminoacyl-tRNA, thus increasing their reactivity as acceptors for peptidyl transferase. The protein is Elongation factor P of Sulfurihydrogenibium sp. (strain YO3AOP1).